The following is a 368-amino-acid chain: Epoxyqueuosine reductase QueH (368 aa).

Positions 6, 7, 87, and 90 each coordinate [4Fe-4S] cluster. Residues C174 and C176 are joined by a disulfide bond.

It belongs to the QueH family.

The enzyme catalyses epoxyqueuosine(34) in tRNA + AH2 = queuosine(34) in tRNA + A + H2O. The protein operates within tRNA modification; tRNA-queuosine biosynthesis. Its function is as follows. Catalyzes the conversion of epoxyqueuosine (oQ) to queuosine (Q), which is a hypermodified base found in the wobble positions of tRNA(Asp), tRNA(Asn), tRNA(His) and tRNA(Tyr). The chain is Epoxyqueuosine reductase QueH from Helicobacter pylori (strain ATCC 700392 / 26695) (Campylobacter pylori).